Reading from the N-terminus, the 407-residue chain is Aminomethyltransferase, mitochondrial (407 aa).

The N-terminal 29 residues, 1 to 29, are a transit peptide targeting the mitochondrion; that stretch reads MRGGLWQVGQSITRRLGQSDKKTIVRRWY. Substrate-binding residues include Glu234, Arg265, and Tyr403.

This sequence belongs to the GcvT family. In terms of assembly, the glycine cleavage system is composed of four proteins: P, T, L and H.

The protein resides in the mitochondrion. The enzyme catalyses N(6)-[(R)-S(8)-aminomethyldihydrolipoyl]-L-lysyl-[protein] + (6S)-5,6,7,8-tetrahydrofolate = N(6)-[(R)-dihydrolipoyl]-L-lysyl-[protein] + (6R)-5,10-methylene-5,6,7,8-tetrahydrofolate + NH4(+). In terms of biological role, the glycine cleavage system catalyzes the degradation of glycine. In Flaveria trinervia (Clustered yellowtops), this protein is Aminomethyltransferase, mitochondrial (GDCST).